A 216-amino-acid chain; its full sequence is Probable disulfide bond formation protein D (216 aa).

An N-terminal signal peptide occupies residues 1–25; the sequence is MKSNKLMALGIVFSIAVLIVIGTIA. A disulfide bridge connects residues cysteine 65 and cysteine 68.

The protein belongs to the thioredoxin family. DsbA subfamily.

Its function is as follows. May be required for disulfide bond formation in some proteins. This Bacillus cereus (strain ATCC 14579 / DSM 31 / CCUG 7414 / JCM 2152 / NBRC 15305 / NCIMB 9373 / NCTC 2599 / NRRL B-3711) protein is Probable disulfide bond formation protein D (bdbD).